The primary structure comprises 581 residues: Arginine--tRNA ligase (581 aa).

Residues 123-133 (PNVAKEMHVGH) carry the 'HIGH' region motif.

It belongs to the class-I aminoacyl-tRNA synthetase family. Monomer.

The protein localises to the cytoplasm. The catalysed reaction is tRNA(Arg) + L-arginine + ATP = L-arginyl-tRNA(Arg) + AMP + diphosphate. In Blochmanniella pennsylvanica (strain BPEN), this protein is Arginine--tRNA ligase.